Here is a 217-residue protein sequence, read N- to C-terminus: Monomethylamine corrinoid protein 2 (217 aa).

Residues 1-91 enclose the B12-binding N-terminal domain; it reads MTNTEIFEKL…ELEKSKVEGE (91 aa). Positions 93–217 constitute a B12-binding domain; sequence TGLAITFVAE…AAKVALNIMK (125 aa). Residue His106 participates in methylcob(III)alamin binding.

The protein belongs to the methylamine corrinoid protein family. In terms of assembly, can form a complex with MtmB.

Its pathway is one-carbon metabolism; methanogenesis from methylamine. Acts as a methyl group carrier between MtmB and MtbA. The sequence is that of Monomethylamine corrinoid protein 2 (mtmC2) from Methanosarcina acetivorans (strain ATCC 35395 / DSM 2834 / JCM 12185 / C2A).